A 366-amino-acid chain; its full sequence is NADH-quinone oxidoreductase subunit D (366 aa).

This sequence belongs to the complex I 49 kDa subunit family. As to quaternary structure, NDH-1 is composed of 14 different subunits. Subunits NuoB, C, D, E, F, and G constitute the peripheral sector of the complex.

It localises to the cell membrane. It catalyses the reaction a quinone + NADH + 5 H(+)(in) = a quinol + NAD(+) + 4 H(+)(out). Its function is as follows. NDH-1 shuttles electrons from NADH, via FMN and iron-sulfur (Fe-S) centers, to quinones in the respiratory chain. The immediate electron acceptor for the enzyme in this species is believed to be a menaquinone. Couples the redox reaction to proton translocation (for every two electrons transferred, four hydrogen ions are translocated across the cytoplasmic membrane), and thus conserves the redox energy in a proton gradient. This is NADH-quinone oxidoreductase subunit D from Bacillus anthracis.